The following is a 198-amino-acid chain: Peptidyl-tRNA hydrolase (198 aa).

Tyrosine 15 contacts tRNA. Histidine 20 functions as the Proton acceptor in the catalytic mechanism. The tRNA site is built by phenylalanine 66, asparagine 68, and asparagine 114.

Belongs to the PTH family. As to quaternary structure, monomer.

The protein resides in the cytoplasm. It carries out the reaction an N-acyl-L-alpha-aminoacyl-tRNA + H2O = an N-acyl-L-amino acid + a tRNA + H(+). Hydrolyzes ribosome-free peptidyl-tRNAs (with 1 or more amino acids incorporated), which drop off the ribosome during protein synthesis, or as a result of ribosome stalling. Functionally, catalyzes the release of premature peptidyl moieties from peptidyl-tRNA molecules trapped in stalled 50S ribosomal subunits, and thus maintains levels of free tRNAs and 50S ribosomes. In Cupriavidus metallidurans (strain ATCC 43123 / DSM 2839 / NBRC 102507 / CH34) (Ralstonia metallidurans), this protein is Peptidyl-tRNA hydrolase.